A 246-amino-acid chain; its full sequence is 2-aminoethylphosphonate cytidylyltransferase (246 aa).

Residues A19, G20, K34, S97, E114, and A115 each coordinate CMP-(2-aminoethyl)phosphonate. 2 residues coordinate Mg(2+): D116 and D145. D145, K161, and D202 together coordinate CMP-(2-aminoethyl)phosphonate. Mg(2+) contacts are provided by E226 and D228.

This sequence belongs to the LicC/PntC cytidylyltransferase family. In terms of assembly, monomer. The cofactor is Mg(2+).

The catalysed reaction is (2-aminoethyl)phosphonate + CTP = CMP-(2-aminoethyl)phosphonate + diphosphate. It participates in phosphorus metabolism; phosphonate biosynthesis. Cytidylyltransferase involved in the biosynthesis of cell-surface phosphonates. Catalyzes the activation of 2-aminoethylphosphonate (AEP) to CMP-2-aminoethylphosphonate (CMP-AEP). Can also use phosphocholine, with much lower efficiency. Exhibits strong activity towards CTP, limited activity towards ATP and no activity with GTP. This is 2-aminoethylphosphonate cytidylyltransferase from Lancefieldella rimae (strain ATCC 49626 / DSM 7090 / CCUG 31168 / NBRC 15546 / VPI D140H-11A) (Atopobium rimae).